We begin with the raw amino-acid sequence, 386 residues long: DNA-directed RNA polymerase subunit Rpo1C (386 aa).

It belongs to the RNA polymerase beta' chain family. Part of the RNA polymerase complex.

The protein localises to the cytoplasm. It catalyses the reaction RNA(n) + a ribonucleoside 5'-triphosphate = RNA(n+1) + diphosphate. Its function is as follows. DNA-dependent RNA polymerase (RNAP) catalyzes the transcription of DNA into RNA using the four ribonucleoside triphosphates as substrates. Forms part of the jaw domain. This chain is DNA-directed RNA polymerase subunit Rpo1C, found in Methanococcus maripaludis (strain DSM 14266 / JCM 13030 / NBRC 101832 / S2 / LL).